The following is a 75-amino-acid chain: U6-lycotoxin-Ls1d (75 aa).

An N-terminal signal peptide occupies residues 1-21; the sequence is MKLLLFTALVLVVISLVEVEA. Positions 22 to 25 are excised as a propeptide; sequence ENER.

This sequence belongs to the neurotoxin 19 (CSTX) family. 06 (U6-Lctx) subfamily. Contains 4 disulfide bonds. In terms of tissue distribution, expressed by the venom gland.

It is found in the secreted. The chain is U6-lycotoxin-Ls1d from Lycosa singoriensis (Wolf spider).